We begin with the raw amino-acid sequence, 129 residues long: Small ribosomal subunit protein uS9 (129 aa).

The tract at residues 97–129 is disordered; it reads LKAQGFLTRDPRKKERKKYGRKKARKSFQFSKR. The span at 110 to 129 shows a compositional bias: basic residues; sequence KERKKYGRKKARKSFQFSKR.

The protein belongs to the universal ribosomal protein uS9 family.

The polypeptide is Small ribosomal subunit protein uS9 (Chlamydia trachomatis serovar A (strain ATCC VR-571B / DSM 19440 / HAR-13)).